A 110-amino-acid chain; its full sequence is T cell receptor alpha variable 22 (110 aa).

Residues 1-21 (MKRILGALLGLLSAQVCCVRG) form the signal peptide. One can recognise an Ig-like domain in the interval 22–110 (IQVEQSPPDL…DSGVYFCAVE (89 aa)). Residues Asn38 and Asn44 are each glycosylated (N-linked (GlcNAc...) asparagine). Cys43 and Cys107 are oxidised to a cystine.

As to quaternary structure, alpha-beta TR is a heterodimer composed of an alpha and beta chain; disulfide-linked. The alpha-beta TR is associated with the transmembrane signaling CD3 coreceptor proteins to form the TR-CD3 (TcR or TCR). The assembly of alpha-beta TR heterodimers with CD3 occurs in the endoplasmic reticulum where a single alpha-beta TR heterodimer associates with one CD3D-CD3E heterodimer, one CD3G-CD3E heterodimer and one CD247 homodimer forming a stable octameric structure. CD3D-CD3E and CD3G-CD3E heterodimers preferentially associate with TR alpha and TR beta chains, respectively. The association of the CD247 homodimer is the last step of TcR assembly in the endoplasmic reticulum and is required for transport to the cell surface.

Its subcellular location is the cell membrane. Functionally, v region of the variable domain of T cell receptor (TR) alpha chain that participates in the antigen recognition. Alpha-beta T cell receptors are antigen specific receptors which are essential to the immune response and are present on the cell surface of T lymphocytes. Recognize peptide-major histocompatibility (MH) (pMH) complexes that are displayed by antigen presenting cells (APC), a prerequisite for efficient T cell adaptive immunity against pathogens. Binding of alpha-beta TR to pMH complex initiates TR-CD3 clustering on the cell surface and intracellular activation of LCK that phosphorylates the ITAM motifs of CD3G, CD3D, CD3E and CD247 enabling the recruitment of ZAP70. In turn ZAP70 phosphorylates LAT, which recruits numerous signaling molecules to form the LAT signalosome. The LAT signalosome propagates signal branching to three major signaling pathways, the calcium, the mitogen-activated protein kinase (MAPK) kinase and the nuclear factor NF-kappa-B (NF-kB) pathways, leading to the mobilization of transcription factors that are critical for gene expression and essential for T cell growth and differentiation. The T cell repertoire is generated in the thymus, by V-(D)-J rearrangement. This repertoire is then shaped by intrathymic selection events to generate a peripheral T cell pool of self-MH restricted, non-autoaggressive T cells. Post-thymic interaction of alpha-beta TR with the pMH complexes shapes TR structural and functional avidity. The chain is T cell receptor alpha variable 22 from Homo sapiens (Human).